The following is a 173-amino-acid chain: MLSLSIATPGTAAIFRRGTASATSTSSSFHGVRIQHQVSARVPAAATISSSSPKPSVVMMSKREAELKEIRSKTTEQLQEEVVDLKGELFMLRLQKSARNEFKSSDFRRMKKQVARMLTVKREREIKEGIKKRLSRKLDRQWKKSIVPRPPPSLKKLQEEEAAEEAAEAAKSA.

A chloroplast-targeting transit peptide spans 1-60 (MLSLSIATPGTAAIFRRGTASATSTSSSFHGVRIQHQVSARVPAAATISSSSPKPSVVMM). Positions 143–173 (KKSIVPRPPPSLKKLQEEEAAEEAAEAAKSA) are disordered. At Ser-172 the chain carries Phosphoserine.

Belongs to the universal ribosomal protein uL29 family. As to quaternary structure, part of the 50S ribosomal subunit.

It localises to the plastid. The protein localises to the chloroplast. This is Large ribosomal subunit protein uL29c (RPL29) from Arabidopsis thaliana (Mouse-ear cress).